Here is a 763-residue protein sequence, read N- to C-terminus: Phosphoglycerol transferase I (763 aa).

Helical transmembrane passes span Met1–Ala21, Trp26–Tyr46, Ile77–Ile97, and Phe108–Phe128.

Belongs to the OpgB family.

Its subcellular location is the cell inner membrane. The enzyme catalyses a phosphatidylglycerol + a membrane-derived-oligosaccharide D-glucose = a 1,2-diacyl-sn-glycerol + a membrane-derived-oligosaccharide 6-(glycerophospho)-D-glucose.. Its pathway is glycan metabolism; osmoregulated periplasmic glucan (OPG) biosynthesis. Functionally, transfers a phosphoglycerol residue from phosphatidylglycerol to the membrane-bound nascent glucan backbones. The chain is Phosphoglycerol transferase I from Escherichia fergusonii (strain ATCC 35469 / DSM 13698 / CCUG 18766 / IAM 14443 / JCM 21226 / LMG 7866 / NBRC 102419 / NCTC 12128 / CDC 0568-73).